Reading from the N-terminus, the 312-residue chain is Ribosomal RNA small subunit methyltransferase H (312 aa).

Residues 35–37 (GGH), D55, F79, D101, and Q108 contribute to the S-adenosyl-L-methionine site. The tract at residues 286 to 306 (LKPSEHEVNENSRSRSSVLRV) is disordered. Basic and acidic residues predominate over residues 287-298 (KPSEHEVNENSR).

Belongs to the methyltransferase superfamily. RsmH family.

Its subcellular location is the cytoplasm. The enzyme catalyses cytidine(1402) in 16S rRNA + S-adenosyl-L-methionine = N(4)-methylcytidine(1402) in 16S rRNA + S-adenosyl-L-homocysteine + H(+). Functionally, specifically methylates the N4 position of cytidine in position 1402 (C1402) of 16S rRNA. In Aeromonas hydrophila subsp. hydrophila (strain ATCC 7966 / DSM 30187 / BCRC 13018 / CCUG 14551 / JCM 1027 / KCTC 2358 / NCIMB 9240 / NCTC 8049), this protein is Ribosomal RNA small subunit methyltransferase H.